The primary structure comprises 476 residues: 2-(3-amino-3-carboxypropyl)histidine synthase subunit 2 (476 aa).

The span at 1 to 15 (MTESAPSAFFTTSTP) shows a compositional bias: polar residues. A disordered region spans residues 1–24 (MTESAPSAFFTTSTPADHVHEEES). Residues Cys102, Cys123, and Cys347 each coordinate [4Fe-4S] cluster. A disordered region spans residues 451–476 (DGVSTAEDSTKMGEGRSGIAQGYSGK).

The protein belongs to the DPH1/DPH2 family. DPH2 subfamily. As to quaternary structure, component of the 2-(3-amino-3-carboxypropyl)histidine synthase complex composed of dph-1, dph-2, dph-3 and a NADH-dependent reductase. Requires [4Fe-4S] cluster as cofactor.

It participates in protein modification; peptidyl-diphthamide biosynthesis. In terms of biological role, required for the first step of diphthamide biosynthesis, a post-translational modification of histidine which occurs in elongation factor 2. Dph-1 and dph-2 transfer a 3-amino-3-carboxypropyl (ACP) group from S-adenosyl-L-methionine (SAM) to a histidine residue, the reaction is assisted by a reduction system comprising dph-3 and a NADH-dependent reductase. Facilitates the reduction of the catalytic iron-sulfur cluster found in the dph-1 subunit. The chain is 2-(3-amino-3-carboxypropyl)histidine synthase subunit 2 (dph-2) from Caenorhabditis elegans.